Reading from the N-terminus, the 234-residue chain is GTP-binding protein YPT52 (234 aa).

GTP contacts are provided by residues 10 to 17, 66 to 70, and 111 to 114; these read GDSSVGKS, DTAGQ, and NKVG. 2 disordered regions span residues 131–151 and 206–234; these read QETPSTETSPDSNEGGDEEQK and NRQIGGGNNGQVDINLQRPSTNDPTSCCS. Residues 132 to 142 are compositionally biased toward polar residues; sequence ETPSTETSPDS. Ser139 and Ser142 each carry phosphoserine. Lys151 is covalently cross-linked (Glycyl lysine isopeptide (Lys-Gly) (interchain with G-Cter in ubiquitin)). Residues 217–234 are compositionally biased toward polar residues; that stretch reads VDINLQRPSTNDPTSCCS. 2 S-geranylgeranyl cysteine lipidation sites follow: Cys232 and Cys233.

The protein belongs to the small GTPase superfamily. Rab family. In terms of assembly, interacts with ROY1, YIF1, YIP3, YIP4 and YIP5.

It localises to the cell membrane. It is found in the endoplasmic reticulum. Required for transport in the endocytic pathway and for correct sorting of the vacuolar hydrolases suggesting a possible intersection of the endocytic with the vacuolar sorting pathway. May be involved in recruiting the MON1-CCZ1 complex to membranes enriched in phosphatidylinositol 3-phosphate (PtdIns[3]P) or other charged lipids, leading to recruitment of YPT7. The protein is GTP-binding protein YPT52 (YPT52) of Saccharomyces cerevisiae (strain ATCC 204508 / S288c) (Baker's yeast).